The primary structure comprises 123 residues: MNAVTETAATTTDMPLPFVFTDAAADKVKQLIDEEGNPDLKLRVFVQGGGCSGFQYGFTFDEEVNEDDTVMNKNGVQLLIDSMSYQYLVGAEIDYKDDLNGAQFVIKNPNATTTCGCGSSFSV.

Cys51, Cys115, and Cys117 together coordinate iron-sulfur cluster.

The protein belongs to the HesB/IscA family. As to quaternary structure, homodimer. Requires iron-sulfur cluster as cofactor.

In terms of biological role, required for insertion of 4Fe-4S clusters. The sequence is that of Putative iron-sulfur cluster insertion protein ErpA from Burkholderia cenocepacia (strain HI2424).